A 316-amino-acid polypeptide reads, in one-letter code: Polyprenyl transferase dpchC (316 aa).

Transmembrane regions (helical) follow at residues 24–44 (PLFT…AKMA), 60–80 (ALCF…NDWI), 105–125 (EAMV…EVML), 154–174 (MLGI…AVIG), 192–212 (CLPL…AYSY), 234–254 (IHLL…IYLF), 258–278 (SLWL…QQLV), and 296–316 (FILG…TGSA).

This sequence belongs to the UbiA prenyltransferase family. It depends on Mg(2+) as a cofactor.

The protein resides in the membrane. Its pathway is secondary metabolite biosynthesis; terpenoid biosynthesis. Its function is as follows. Polyprenyl transferase; part of the gene cluster that mediates the biosynthesis of the diterpenoid pyrones higginsianins A and B. The first step of the pathway is the synthesis of the alpha-pyrone moiety by the polyketide synthase dpchA via condensation of one acetyl-CoA starter unit with 3 malonyl-CoA units and 2 methylations. The alpha-pyrone is then combined with geranylgeranyl pyrophosphate (GGPP) formed by the GGPP synthase dpchD through the action of the prenyltransferase dpchC to yield a linear alpha-pyrone diterpenoid. Subsequent steps in the diterpenoid pyrone biosynthetic pathway involve the decalin core formation, which is initiated by the epoxidation of the C10-C11 olefin by the FAD-dependent oxidoreductase dpchE, and is followed by a cyclization cascade catalyzed by the terpene cyclase dpchB. The short chain dehydrogenase/reductase dpchG then oxidizes the 8S hydroxy group to a ketone and the short chain dehydrogenase/reductase dpchH reduces the ketone to the 8R hydroxy group to yield higginsianin B. Finally, the FAD-dependent oxidoreductase dpchF converts higginsianin B into higginsianin A. The sequence is that of Polyprenyl transferase dpchC from Colletotrichum higginsianum (strain IMI 349063) (Crucifer anthracnose fungus).